The primary structure comprises 517 residues: Crotonobetaine/carnitine--CoA ligase (517 aa).

This sequence belongs to the ATP-dependent AMP-binding enzyme family.

It catalyses the reaction 4-(trimethylamino)butanoate + ATP + CoA = 4-(trimethylamino)butanoyl-CoA + AMP + diphosphate. The catalysed reaction is crotonobetaine + ATP + CoA = crotonobetainyl-CoA + AMP + diphosphate. It carries out the reaction (R)-carnitine + ATP + CoA = (R)-carnitinyl-CoA + AMP + diphosphate. The protein operates within amine and polyamine metabolism; carnitine metabolism. In terms of biological role, catalyzes the transfer of CoA to carnitine, generating the initial carnitinyl-CoA needed for the CaiB reaction cycle. Also has activity toward crotonobetaine and gamma-butyrobetaine. The sequence is that of Crotonobetaine/carnitine--CoA ligase from Salmonella paratyphi A (strain ATCC 9150 / SARB42).